The following is a 782-amino-acid chain: Tripartite terminase subunit 1 (782 aa).

The C3H1-type zinc-finger motif lies at cysteine 190–histidine 218. Tyrosine 666–glutamate 673 contributes to the ATP binding site. Residues alanine 727–glutamate 740 show a composition bias toward pro residues. The interval alanine 727 to valine 754 is disordered.

This sequence belongs to the herpesviridae TRM1 protein family. As to quaternary structure, associates with TRM2 and TRM3 to form the tripartite terminase complex. Interacts with portal protein.

It localises to the host nucleus. In terms of biological role, component of the molecular motor that translocates viral genomic DNA in empty capsid during DNA packaging. Forms a tripartite terminase complex together with TRM2 and TRM3 in the host cytoplasm. Once the complex reaches the host nucleus, it interacts with the capsid portal vertex. This portal forms a ring in which genomic DNA is translocated into the capsid. TRM1 carries an endonuclease activity that plays an important role for the cleavage of concatemeric viral DNA into unit length genomes. The chain is Tripartite terminase subunit 1 from Tupaiid herpesvirus (strain 2) (TuHV-2).